A 135-amino-acid polypeptide reads, in one-letter code: CDGSH iron-sulfur domain-containing protein 2B (135 aa).

The Lumenal segment spans residues 1–37 (MVLETISKIIKTQLPAYLKKFPLPETIGGFARLTVLD). The chain crosses the membrane as a helical span at residues 38–60 (WLRLLPLLGILTLLGYLTIRPFL). The Cytoplasmic portion of the chain corresponds to 61 to 135 (PKKKKQKDSL…GPLILKKKII (75 aa)). Residues cysteine 99, cysteine 101, cysteine 110, and histidine 114 each coordinate [2Fe-2S] cluster.

This sequence belongs to the CISD protein family. CISD2 subfamily. As to quaternary structure, homodimer. The cofactor is [2Fe-2S] cluster.

It localises to the endoplasmic reticulum membrane. The protein resides in the mitochondrion outer membrane. Its function is as follows. Regulator of autophagy that contributes to antagonize becn1-mediated cellular autophagy at the endoplasmic reticulum. Participates in the interaction of bcl2 with becn1 and is required for bcl2-mediated depression of endoplasmic reticulum Ca(2+) stores during autophagy. This chain is CDGSH iron-sulfur domain-containing protein 2B (cisd2b), found in Oncorhynchus mykiss (Rainbow trout).